The sequence spans 243 residues: Tubulin-folding cofactor B (243 aa).

In terms of domain architecture, CAP-Gly spans 181-223; sequence RAESLGPGYWVGIQYDEPLGKHDGMVKGTRFFECPRLQGGMVR.

Belongs to the TBCB family. In terms of assembly, supercomplex made of cofactors A to E. Cofactors A and D function by capturing and stabilizing tubulin in a quasi-native conformation. Cofactor E binds to the cofactor D-tubulin complex; interaction with cofactor C then causes the release of tubulin polypeptides that are committed to the native state. Interacts with TUBA6. Expressed in roots, stems, leaves, flowers and siliques.

The protein localises to the cytoplasm. Functionally, involved in control of cell division. Regulates probably the availability of alpha-tubulin for dimerization of alpha-/beta-tubulin, which is required for proper microtubule biogenesis. Decreased expression of TFCB results in enlarged mesophyll cells and leaf epidermal cells with bulged nuclei, increased ploidy and increased numbers of spindles and phragmoplasts. This Arabidopsis thaliana (Mouse-ear cress) protein is Tubulin-folding cofactor B (TFCB).